Here is a 362-residue protein sequence, read N- to C-terminus: Adenosine deaminase (362 aa).

Zn(2+)-binding residues include H41 and H43. 43 to 45 serves as a coordination point for a purine D-ribonucleoside; it reads HLD. A gating helix loop; regulates binding affinity for substrates and thus substrate selectivity region spans residues 169–183; the sequence is IGETGISEESLRKAA. G200 contributes to the a purine D-ribonucleoside binding site. A Zn(2+)-binding site is contributed by H225. 3 residues coordinate a purine D-ribonucleoside: E228, H252, and D309. Zn(2+) is bound at residue D309.

Belongs to the metallo-dependent hydrolases superfamily. Adenosine and AMP deaminases family. Zn(2+) is required as a cofactor.

The catalysed reaction is adenosine + H2O + H(+) = inosine + NH4(+). It functions in the pathway purine metabolism; purine nucleoside salvage. Inhibited by coformycin but not by methylthiocoformycin (MT-coformycin). In terms of biological role, catalyzes the hydrolytic deamination of adenosine to produce inosine. Unlike other Plasmodium adenosine deaminases, does not catalyze the deamination of 5'-methylthioadenosine (MTA). Plays an essential role in the purine salvage pathway which allows the parasite to use host cell purines for the synthesis of nucleic acids. This Plasmodium gallinaceum protein is Adenosine deaminase.